Reading from the N-terminus, the 156-residue chain is Ribosomal RNA large subunit methyltransferase H (156 aa).

S-adenosyl-L-methionine contacts are provided by residues L73, G104, and 123–128 (LSALTL).

The protein belongs to the RNA methyltransferase RlmH family. In terms of assembly, homodimer.

The protein resides in the cytoplasm. It carries out the reaction pseudouridine(1915) in 23S rRNA + S-adenosyl-L-methionine = N(3)-methylpseudouridine(1915) in 23S rRNA + S-adenosyl-L-homocysteine + H(+). Functionally, specifically methylates the pseudouridine at position 1915 (m3Psi1915) in 23S rRNA. This Colwellia psychrerythraea (strain 34H / ATCC BAA-681) (Vibrio psychroerythus) protein is Ribosomal RNA large subunit methyltransferase H.